A 267-amino-acid polypeptide reads, in one-letter code: Tryptophan synthase alpha chain (267 aa).

Catalysis depends on proton acceptor residues Glu-47 and Asp-58.

The protein belongs to the TrpA family. As to quaternary structure, tetramer of two alpha and two beta chains.

It catalyses the reaction (1S,2R)-1-C-(indol-3-yl)glycerol 3-phosphate + L-serine = D-glyceraldehyde 3-phosphate + L-tryptophan + H2O. Its pathway is amino-acid biosynthesis; L-tryptophan biosynthesis; L-tryptophan from chorismate: step 5/5. In terms of biological role, the alpha subunit is responsible for the aldol cleavage of indoleglycerol phosphate to indole and glyceraldehyde 3-phosphate. This chain is Tryptophan synthase alpha chain, found in Chlorobium phaeovibrioides (strain DSM 265 / 1930) (Prosthecochloris vibrioformis (strain DSM 265)).